Reading from the N-terminus, the 120-residue chain is Glycine cleavage system H protein (120 aa).

Residues 17 to 99 (IATVGITSHA…QGAGWFFKLK (83 aa)) enclose the Lipoyl-binding domain. At lysine 58 the chain carries N6-lipoyllysine.

Belongs to the GcvH family. The glycine cleavage system is composed of four proteins: P, T, L and H. (R)-lipoate serves as cofactor.

Its function is as follows. The glycine cleavage system catalyzes the degradation of glycine. The H protein shuttles the methylamine group of glycine from the P protein to the T protein. This Agrobacterium fabrum (strain C58 / ATCC 33970) (Agrobacterium tumefaciens (strain C58)) protein is Glycine cleavage system H protein.